Reading from the N-terminus, the 113-residue chain is Ig heavy chain V-III region E109 (113 aa).

The Ig-like domain maps to 1–113 (EVKLEESGGG…YWGQGTLVTV (113 aa)). A disulfide bridge links C22 with C98.

In Mus musculus (Mouse), this protein is Ig heavy chain V-III region E109.